The chain runs to 143 residues: Transcriptional regulator SlyA (143 aa).

Residues 2 to 135 (ESTLGSDLAR…LSGLIDKLER (134 aa)) form the HTH marR-type domain. The H-T-H motif DNA-binding region spans 49 to 72 (QIQLAKAIGIEQPSLVRTLDQLEE).

This sequence belongs to the SlyA family. As to quaternary structure, homodimer.

In terms of biological role, transcription regulator that can specifically activate or repress expression of target genes. The protein is Transcriptional regulator SlyA of Yersinia enterocolitica serotype O:8 / biotype 1B (strain NCTC 13174 / 8081).